Consider the following 313-residue polypeptide: Beta-ketoacyl-[acyl-carrier-protein] synthase III (313 aa).

Catalysis depends on residues Cys112 and His238. The segment at 239–243 (QANIR) is ACP-binding. Residue Asn268 is part of the active site.

It belongs to the thiolase-like superfamily. FabH family. In terms of assembly, homodimer.

Its subcellular location is the cytoplasm. It catalyses the reaction malonyl-[ACP] + acetyl-CoA + H(+) = 3-oxobutanoyl-[ACP] + CO2 + CoA. It participates in lipid metabolism; fatty acid biosynthesis. In terms of biological role, catalyzes the condensation reaction of fatty acid synthesis by the addition to an acyl acceptor of two carbons from malonyl-ACP. Catalyzes the first condensation reaction which initiates fatty acid synthesis and may therefore play a role in governing the total rate of fatty acid production. Possesses both acetoacetyl-ACP synthase and acetyl transacylase activities. Its substrate specificity determines the biosynthesis of branched-chain and/or straight-chain of fatty acids. This Staphylococcus saprophyticus subsp. saprophyticus (strain ATCC 15305 / DSM 20229 / NCIMB 8711 / NCTC 7292 / S-41) protein is Beta-ketoacyl-[acyl-carrier-protein] synthase III.